Reading from the N-terminus, the 288-residue chain is Elongation factor Ts (288 aa).

Positions 82-85 are involved in Mg(2+) ion dislocation from EF-Tu; that stretch reads TDFV.

This sequence belongs to the EF-Ts family.

Its subcellular location is the cytoplasm. In terms of biological role, associates with the EF-Tu.GDP complex and induces the exchange of GDP to GTP. It remains bound to the aminoacyl-tRNA.EF-Tu.GTP complex up to the GTP hydrolysis stage on the ribosome. This is Elongation factor Ts from Chlorobium phaeovibrioides (strain DSM 265 / 1930) (Prosthecochloris vibrioformis (strain DSM 265)).